The sequence spans 397 residues: Lysophospholipid transporter LplT (397 aa).

The Periplasmic portion of the chain corresponds to 1–17 (MSESVHTNTSLWSKGMK). The helical transmembrane segment at 18-38 (AVIVAQFLSAFGDNALLFATL) threads the bilayer. Over 39 to 52 (ALLKAQFYPEWSQP) the chain is Cytoplasmic. A helical membrane pass occupies residues 53–73 (ILQMVFVGAYILFAPFVGQVA). Over 74-90 (DSFAKGRVMMFANGLKL) the chain is Periplasmic. A helical membrane pass occupies residues 91 to 111 (LGAASICFGINPFLGYTLVGV). At 112–144 (GAAAYSPAKYGILGELTTGSKLVKANGLMEAST) the chain is on the cytoplasmic side. The chain crosses the membrane as a helical span at residues 145–165 (IAAILLGSVAGGVLADWHVLV). Position 166 (A166) is a topological domain, periplasmic. A helical transmembrane segment spans residues 167 to 187 (LAACALAYGGAVVANIYIPKL). Topologically, residues 188-226 (AAARPGQSWNLINMTRSFLNACTSLWRNGETRFSLVGTS) are cytoplasmic. Residues 227–247 (LFWGAGVTLRFLLVLWVPVAL) form a helical membrane-spanning segment. Residues 248–256 (GITDNATPT) are Periplasmic-facing. The chain crosses the membrane as a helical span at residues 257–277 (YLNAMVAIGIVVGAGAAAKLV). The Cytoplasmic portion of the chain corresponds to 278 to 280 (TLE). The chain crosses the membrane as a helical span at residues 281–301 (TVSRCMPAGILIGVVVLIFSL). The Periplasmic portion of the chain corresponds to 302–304 (QHE). A helical transmembrane segment spans residues 305–325 (QLPAYALLMLIGVLGGFFVVP). Over 326-343 (LNALLQERGKKSVGAGNA) the chain is Cytoplasmic. A helical membrane pass occupies residues 344-364 (IAVQNLGENSAMLLMLGIYSL). At 365–366 (AV) the chain is on the periplasmic side. A helical membrane pass occupies residues 367–387 (MVGIPVVPIGIGFGALFALAI). Residues 388 to 397 (TALWIWQRRH) are Cytoplasmic-facing.

The protein belongs to the major facilitator superfamily. LplT (TC 2.A.1.42) family.

The protein localises to the cell inner membrane. Functionally, catalyzes the facilitated diffusion of 2-acyl-glycero-3-phosphoethanolamine (2-acyl-GPE) into the cell. This chain is Lysophospholipid transporter LplT, found in Escherichia coli O157:H7 (strain EC4115 / EHEC).